Here is a 172-residue protein sequence, read N- to C-terminus: Ribosome maturation factor RimM (172 aa).

A PRC barrel domain is found at 94 to 167 (EGSYYYKDII…VAHVIVPEGL (74 aa)).

It belongs to the RimM family. Binds ribosomal protein uS19.

Its subcellular location is the cytoplasm. In terms of biological role, an accessory protein needed during the final step in the assembly of 30S ribosomal subunit, possibly for assembly of the head region. Essential for efficient processing of 16S rRNA. May be needed both before and after RbfA during the maturation of 16S rRNA. It has affinity for free ribosomal 30S subunits but not for 70S ribosomes. The polypeptide is Ribosome maturation factor RimM (Lacticaseibacillus paracasei (strain ATCC 334 / BCRC 17002 / CCUG 31169 / CIP 107868 / KCTC 3260 / NRRL B-441) (Lactobacillus paracasei)).